The following is an 886-amino-acid chain: Alanine--tRNA ligase (886 aa).

4 residues coordinate Zn(2+): His564, His568, Cys676, and His680.

Belongs to the class-II aminoacyl-tRNA synthetase family. It depends on Zn(2+) as a cofactor.

The protein localises to the cytoplasm. The catalysed reaction is tRNA(Ala) + L-alanine + ATP = L-alanyl-tRNA(Ala) + AMP + diphosphate. Functionally, catalyzes the attachment of alanine to tRNA(Ala) in a two-step reaction: alanine is first activated by ATP to form Ala-AMP and then transferred to the acceptor end of tRNA(Ala). Also edits incorrectly charged Ser-tRNA(Ala) and Gly-tRNA(Ala) via its editing domain. The sequence is that of Alanine--tRNA ligase from Methylobacterium sp. (strain 4-46).